Reading from the N-terminus, the 130-residue chain is Small ribosomal subunit protein uS9 (130 aa).

A disordered region spans residues 109 to 130; that stretch reads RVKERKKYGQKGARAKFQFSKR.

The protein belongs to the universal ribosomal protein uS9 family.

This chain is Small ribosomal subunit protein uS9, found in Desulfotalea psychrophila (strain LSv54 / DSM 12343).